Here is a 509-residue protein sequence, read N- to C-terminus: Cardiolipin synthase 1 (509 aa).

A run of 3 helical transmembrane segments spans residues 4-24, 30-50, and 59-79; these read PIVQ…LLNT, YTFV…VIFI, and LAWF…YAIF. 2 PLD phosphodiesterase domains span residues 238–265 and 422–449; these read VNYR…GDEY and KDGF…DVRS. Active-site residues include His243, Lys245, Asp250, His427, Lys429, and Asp434.

Belongs to the phospholipase D family. Cardiolipin synthase subfamily.

It localises to the cell membrane. It carries out the reaction 2 a 1,2-diacyl-sn-glycero-3-phospho-(1'-sn-glycerol) = a cardiolipin + glycerol. In terms of biological role, catalyzes the reversible phosphatidyl group transfer from one phosphatidylglycerol molecule to another to form cardiolipin (CL) (diphosphatidylglycerol) and glycerol. In Bacillus cereus (strain ATCC 14579 / DSM 31 / CCUG 7414 / JCM 2152 / NBRC 15305 / NCIMB 9373 / NCTC 2599 / NRRL B-3711), this protein is Cardiolipin synthase 1 (cls1).